We begin with the raw amino-acid sequence, 134 residues long: Large-conductance mechanosensitive channel (134 aa).

Helical transmembrane passes span 15 to 35 and 80 to 100; these read IDLA…QSVV and GNFI…FLAV.

It belongs to the MscL family. In terms of assembly, homopentamer.

It localises to the cell inner membrane. Its function is as follows. Channel that opens in response to stretch forces in the membrane lipid bilayer. May participate in the regulation of osmotic pressure changes within the cell. The protein is Large-conductance mechanosensitive channel of Methylocella silvestris (strain DSM 15510 / CIP 108128 / LMG 27833 / NCIMB 13906 / BL2).